The sequence spans 98 residues: Large ribosomal subunit protein uL23 (98 aa).

The protein belongs to the universal ribosomal protein uL23 family. Part of the 50S ribosomal subunit. Contacts protein L29, and trigger factor when it is bound to the ribosome.

Its function is as follows. One of the early assembly proteins it binds 23S rRNA. One of the proteins that surrounds the polypeptide exit tunnel on the outside of the ribosome. Forms the main docking site for trigger factor binding to the ribosome. The protein is Large ribosomal subunit protein uL23 of Cellvibrio japonicus (strain Ueda107) (Pseudomonas fluorescens subsp. cellulosa).